Consider the following 248-residue polypeptide: DNA repair protein RecO (248 aa).

The protein belongs to the RecO family.

In terms of biological role, involved in DNA repair and RecF pathway recombination. This is DNA repair protein RecO from Rubrobacter xylanophilus (strain DSM 9941 / JCM 11954 / NBRC 16129 / PRD-1).